Reading from the N-terminus, the 553-residue chain is Arginine--tRNA ligase (553 aa).

The 'HIGH' region signature appears at 132–140; that stretch reads PTGDLHIGH.

This sequence belongs to the class-I aminoacyl-tRNA synthetase family. In terms of assembly, monomer.

The protein resides in the cytoplasm. The catalysed reaction is tRNA(Arg) + L-arginine + ATP = L-arginyl-tRNA(Arg) + AMP + diphosphate. The sequence is that of Arginine--tRNA ligase from Staphylococcus aureus (strain Mu50 / ATCC 700699).